A 414-amino-acid polypeptide reads, in one-letter code: Gamma-glutamyl phosphate reductase (414 aa).

This sequence belongs to the gamma-glutamyl phosphate reductase family.

It is found in the cytoplasm. The catalysed reaction is L-glutamate 5-semialdehyde + phosphate + NADP(+) = L-glutamyl 5-phosphate + NADPH + H(+). Its pathway is amino-acid biosynthesis; L-proline biosynthesis; L-glutamate 5-semialdehyde from L-glutamate: step 2/2. Functionally, catalyzes the NADPH-dependent reduction of L-glutamate 5-phosphate into L-glutamate 5-semialdehyde and phosphate. The product spontaneously undergoes cyclization to form 1-pyrroline-5-carboxylate. This is Gamma-glutamyl phosphate reductase from Xanthomonas axonopodis pv. citri (strain 306).